A 247-amino-acid polypeptide reads, in one-letter code: NAD-dependent protein deacetylase 2 (247 aa).

Residues 1 to 247 (MDQIRQLAQW…ASVRKQIQAE (247 aa)) form the Deacetylase sirtuin-type domain. NAD(+)-binding residues include A23, T27, F34, R35, Q103, I105, D106, and H121. F34 contacts nicotinamide. Nicotinamide-binding residues include I105 and D106. Catalysis depends on H121, which acts as the Proton acceptor. Residues C129, C132, C149, and C152 each coordinate Zn(2+). T188, S189, N215, and I233 together coordinate NAD(+).

The protein belongs to the sirtuin family. Class U subfamily. Requires Zn(2+) as cofactor.

The protein localises to the cytoplasm. It catalyses the reaction N(6)-acetyl-L-lysyl-[protein] + NAD(+) + H2O = 2''-O-acetyl-ADP-D-ribose + nicotinamide + L-lysyl-[protein]. In terms of biological role, NAD-dependent protein deacetylase which modulates the activities of several enzymes which are inactive in their acetylated form. The polypeptide is NAD-dependent protein deacetylase 2 (Geobacillus kaustophilus (strain HTA426)).